A 325-amino-acid polypeptide reads, in one-letter code: Elongation factor P--(R)-beta-lysine ligase (325 aa).

76 to 78 (SPE) contributes to the substrate binding site. Residues 100–102 (RNE) and N109 contribute to the ATP site. Y118 contacts substrate. 244 to 245 (EL) provides a ligand contact to ATP. Substrate is bound at residue E251. Position 300 (G300) interacts with ATP.

The protein belongs to the class-II aminoacyl-tRNA synthetase family. EpmA subfamily. Homodimer.

The catalysed reaction is D-beta-lysine + L-lysyl-[protein] + ATP = N(6)-((3R)-3,6-diaminohexanoyl)-L-lysyl-[protein] + AMP + diphosphate + H(+). In terms of biological role, with EpmB is involved in the beta-lysylation step of the post-translational modification of translation elongation factor P (EF-P). Catalyzes the ATP-dependent activation of (R)-beta-lysine produced by EpmB, forming a lysyl-adenylate, from which the beta-lysyl moiety is then transferred to the epsilon-amino group of a conserved specific lysine residue in EF-P. This Edwardsiella ictaluri (strain 93-146) protein is Elongation factor P--(R)-beta-lysine ligase.